Here is a 198-residue protein sequence, read N- to C-terminus: Probable GTP-binding protein EngB (198 aa).

The 175-residue stretch at 21-195 (NFSEVAFLGR…EDIIINQTLG (175 aa)) folds into the EngB-type G domain. Residues 29-36 (GRSNVGKS), 56-60 (GKTQL), 81-84 (DLPG), 151-154 (TKCD), and 174-176 (VSN) each bind GTP. The Mg(2+) site is built by S36 and T58.

The protein belongs to the TRAFAC class TrmE-Era-EngA-EngB-Septin-like GTPase superfamily. EngB GTPase family. The cofactor is Mg(2+).

Necessary for normal cell division and for the maintenance of normal septation. This is Probable GTP-binding protein EngB from Campylobacter jejuni subsp. jejuni serotype O:2 (strain ATCC 700819 / NCTC 11168).